Reading from the N-terminus, the 206-residue chain is Small ribosomal subunit protein uS4 (206 aa).

Residues 93–156 form the S4 RNA-binding domain; sequence CRLDNLVYRL…RKIKIIAEAL (64 aa).

The protein belongs to the universal ribosomal protein uS4 family. In terms of assembly, part of the 30S ribosomal subunit. Contacts protein S5. The interaction surface between S4 and S5 is involved in control of translational fidelity.

One of the primary rRNA binding proteins, it binds directly to 16S rRNA where it nucleates assembly of the body of the 30S subunit. In terms of biological role, with S5 and S12 plays an important role in translational accuracy. The polypeptide is Small ribosomal subunit protein uS4 (Protochlamydia amoebophila (strain UWE25)).